We begin with the raw amino-acid sequence, 417 residues long: Magnesium-protoporphyrin IX monomethyl ester [oxidative] cyclase, chloroplastic (417 aa).

A chloroplast-targeting transit peptide spans 1 to 45 (MASAMELSLLNPAMHHYGIAAKTASHLPVVPARRASSGAVRFRVR).

This sequence belongs to the AcsF family. Fe cation serves as cofactor.

It localises to the plastid. The protein resides in the chloroplast membrane. It carries out the reaction Mg-protoporphyrin IX 13-monomethyl ester + 3 NADPH + 3 O2 + 2 H(+) = 3,8-divinyl protochlorophyllide a + 3 NADP(+) + 5 H2O. Its pathway is porphyrin-containing compound metabolism; chlorophyll biosynthesis. Catalyzes the formation of the isocyclic ring in chlorophyll biosynthesis. Mediates the cyclase reaction, which results in the formation of divinylprotochlorophyllide (Pchlide) characteristic of all chlorophylls from magnesium-protoporphyrin IX 13-monomethyl ester (MgPMME). This Hordeum vulgare (Barley) protein is Magnesium-protoporphyrin IX monomethyl ester [oxidative] cyclase, chloroplastic (CRD1).